The chain runs to 373 residues: GTP cyclohydrolase 1 type 2 homolog (373 aa).

Residues His68, His69, Asp107, His333, and Glu336 each contribute to the a divalent metal cation site.

It belongs to the GTP cyclohydrolase I type 2/NIF3 family. As to quaternary structure, homohexamer.

This Bacillus subtilis (strain 168) protein is GTP cyclohydrolase 1 type 2 homolog (yqfO).